The chain runs to 1203 residues: Serine/threonine-protein kinase Nek1 (1203 aa).

The region spanning 4–258 (YVRLQKIGEG…VNSILEKGFI (255 aa)) is the Protein kinase domain. ATP contacts are provided by residues 10–18 (IGEGSFGKA) and Lys-33. The Proton acceptor role is filled by Asp-128. Position 156 is a phosphothreonine (Thr-156). Thr-162 is subject to Phosphothreonine; by autocatalysis. Positions 329-357 (LLEKKPPPKHKQAHQIPVKKMNSGEERKK) are disordered. Residues Ser-417 and Ser-437 each carry the phosphoserine modification. Thr-615 carries the post-translational modification Phosphothreonine. Ser-618 is modified (phosphoserine). Disordered regions lie at residues 643–662 (LTDTQEEEMEKSNSAISSKR) and 674–708 (AQEDEKEKQHHSGSCETVGHKDEREYETENAISSD). Basic and acidic residues predominate over residues 674–683 (AQEDEKEKQH). Phosphoserine occurs at positions 750, 786, 820, and 832. Disordered regions lie at residues 814–866 (PSAT…LPPV) and 888–925 (AVQQSEVCEDRIPGNVDQSCKDQRDPAVDDSPQSGCDV). A compositionally biased stretch (acidic residues) spans 839-850 (NVEEPDDLETEV). A Phosphoserine modification is found at Ser-997. Disordered regions lie at residues 1021–1045 (SLEIDELEDEPIKEGPSDSEDTVFE) and 1063–1120 (REQP…ETTS). The residue at position 1071 (Ser-1071) is a Phosphoserine.

The protein belongs to the protein kinase superfamily. NEK Ser/Thr protein kinase family. NIMA subfamily. In terms of assembly, binds to CBY2. Found in a complex with CFAP410, NEK1 and SPATA7. Interacts with CFAP410. Interacts (via Ser-997 phosphorylated form) with 14-3-3 proteins. It depends on Mg(2+) as a cofactor. Predominantly in testes (germ cells and Sertoli cells). Lower levels in ovary (oocytes and granulosa cells), thymus and lung.

The protein resides in the nucleus. The protein localises to the cytoplasm. It is found in the cytoskeleton. It localises to the microtubule organizing center. Its subcellular location is the centrosome. The catalysed reaction is L-seryl-[protein] + ATP = O-phospho-L-seryl-[protein] + ADP + H(+). The enzyme catalyses L-threonyl-[protein] + ATP = O-phospho-L-threonyl-[protein] + ADP + H(+). In terms of biological role, phosphorylates serines and threonines, but also appears to possess tyrosine kinase activity. Involved in DNA damage checkpoint control and for proper DNA damage repair. In response to injury that includes DNA damage, NEK1 phosphorylates VDAC1 to limit mitochondrial cell death. May be implicated in the control of meiosis. Involved in cilium assembly. In Mus musculus (Mouse), this protein is Serine/threonine-protein kinase Nek1 (Nek1).